Consider the following 103-residue polypeptide: MANQKIRIRLKAFDYRLIDQSAQEIVETAKRTGAVVRGPVPLPTRKQRFDILRSPHVNKASRDQLEIRTHLRLMDIVDPTDKTVDALMKLDLPAGVDVEIKLQ.

This sequence belongs to the universal ribosomal protein uS10 family. Part of the 30S ribosomal subunit.

Its function is as follows. Involved in the binding of tRNA to the ribosomes. This chain is Small ribosomal subunit protein uS10, found in Dechloromonas aromatica (strain RCB).